Here is a 126-residue protein sequence, read N- to C-terminus: Aspartate 1-decarboxylase (126 aa).

The active-site Schiff-base intermediate with substrate; via pyruvic acid is the S25. S25 is modified (pyruvic acid (Ser)). T57 contributes to the substrate binding site. Y58 acts as the Proton donor in catalysis. 73–75 (GAA) contributes to the substrate binding site.

It belongs to the PanD family. As to quaternary structure, heterooctamer of four alpha and four beta subunits. Pyruvate is required as a cofactor. In terms of processing, is synthesized initially as an inactive proenzyme, which is activated by self-cleavage at a specific serine bond to produce a beta-subunit with a hydroxyl group at its C-terminus and an alpha-subunit with a pyruvoyl group at its N-terminus.

The protein localises to the cytoplasm. It carries out the reaction L-aspartate + H(+) = beta-alanine + CO2. The protein operates within cofactor biosynthesis; (R)-pantothenate biosynthesis; beta-alanine from L-aspartate: step 1/1. Its function is as follows. Catalyzes the pyruvoyl-dependent decarboxylation of aspartate to produce beta-alanine. The sequence is that of Aspartate 1-decarboxylase from Yersinia pseudotuberculosis serotype IB (strain PB1/+).